The chain runs to 191 residues: Salivary lipocalin (191 aa).

A signal peptide spans 1–16 (MKLLLLLCLGLTLASS). A glycan (N-linked (GlcNAc...) asparagine) is linked at Asn69. Cys84 and Cys176 form a disulfide bridge.

This sequence belongs to the calycin superfamily. Lipocalin family. In terms of assembly, homodimer. In the submaxillary salivary glands of mature male pigs, but absent from that of females. Expression was much lower in submaxillary glands of castrated male pigs than in sexually mature individuals.

It localises to the secreted. Its function is as follows. Binds pheromones, the pheromones are released from the saliva of males and affect the sexual behavior of females. This is Salivary lipocalin (SAL1) from Sus scrofa (Pig).